A 301-amino-acid polypeptide reads, in one-letter code: Mitochondrial thiamine pyrophosphate carrier 1 (301 aa).

Solcar repeat units follow at residues 15 to 102, 115 to 200, and 206 to 293; these read VTPT…ISKS, SSAN…AREL, and RVPF…SLSF. The next 6 membrane-spanning stretches (helical) occupy residues 20–38, 79–99, 121–141, 172–192, 207–227, and 252–272; these read ALVA…TAPL, VPAE…YSII, LIVG…FDLL, IYAG…LMFW, VPFI…GITF, and IFVT…FGIS.

The protein belongs to the mitochondrial carrier (TC 2.A.29) family.

The protein resides in the mitochondrion inner membrane. In terms of biological role, mitochondrial transporter that mediates uptake of thiamine pyrophosphate (ThPP) into mitochondria. The chain is Mitochondrial thiamine pyrophosphate carrier 1 (TPC1) from Candida albicans (strain SC5314 / ATCC MYA-2876) (Yeast).